Consider the following 1398-residue polypeptide: MRRMNELMKILGQTGQAMTFDQIKIQLASSEQIRSWSYGEIKKPETINYRTFKPERDGLFCARIFGPIKDYECLCGKYKRMKFRGIICEKCGVEVTLAKVRRERMGHIELASPVAHIWFLKSLPSRIGLMVDMTLKDLEKILYFESYVVLEPGTSPLKQFSLLTEDQYLDVMDEHGDDGIEVGIGAEAIKKVLERIDCKADKERLRQELKDTTSEAKRKKLVKRLKLIEAFADSESRPEWMIMDLIPVIPPELRPLVPLDGGRFATSDLNDLYRRVINRNNRLKRLIELRAPDIIVRNEKRMLQESVDALFDNGRRGRAITGANKRPLKSLSDMLKGKQGRFRQNLLGKRVDYSGRSVIVVGPELKLHQCGLPKKMALELFKPFIYSKLEKYGHATTIKAAKRMVEKERPEVWDILEEVIREHPVMLNRAPTLHRLGIQAFEPVLIEGKAIQLHPLVCTAFNADFDGDQMAVHVPLSLEAQLEARVLMMSTNNILSPANGKPIIVPSQDIVLGLYYLSLETPEFLATPDRNEYDAEGRLTVTGASSFATIGEVEYALSAGAIKLHDKIVARFDTVDAEGKPVRQTVITTPGRMLIAQILPRHPAIPFSLINKQLTKKNVSDVIDAVYRHCGQKECVIFCDRMMGLGFRHAAKAGISFGKDDMIIPAEKKVLVERTAAEVKEFEQQYQDGLITAGERYNKVVDAWSRCTDEVQAAMMKEISRQEVGKVTNSVWMMSHSGARGSPAQMKQLAGMRGLMAKPSGEIIEQPIIANFKEGLSVLDYFTSTHGARKGLADTALKTANSGYLTRRLVDVAQDCIIVEDDCGSERGLTVRAVMDGGEIVSSLSERILGRTVAADILDPATGEVLFKRDTLIEEAQAEKIEKAGVESVLIRSVLTCESRVGVCGLCYGRDLARGTPVNIGEAVGVIAAQSIGEPGTQLTMRTFHIGGAAQRGAEQSMVEASRDGHVTINNRTIVHNSQNVPIVMSRNCEIVLTDDKGVERARYRVPYGARLLVEEGAAVTRNQKLAEWDPYTLPIITEHSGTVEYLDLIDSITLVERMDEVTGLTSKVVVDYKQAAKGVDLRPRLQLKDANGHVIKLSNGNDARYFLSPDSLLSVENGAQVSAGDVLARIPREGSKTRDITGGLPRVAELFEARRPKDHAIISETDGRVEFGKDYKAKRRIIVKNDETGEETDYLIPKGKHVSVQEGDFVRVGDPLVDGPRVPHDILKVLGVEALSDYLVNEIQDVYRLQGVKINDKHIEVIVRQMLQKVEILEPGDTTYLIGETVDRIEFETENTKRLNMGERPAQAMPVLQGITKASLQTQSFISAASFQETTRVLTEAATAGKKDTLNGLKENVIVGRLIPAGTGSVMNKLRAIAAGQDRQRLAQARPVVSKAD.

The Zn(2+) site is built by cysteine 73, cysteine 75, cysteine 88, and cysteine 91. Aspartate 464, aspartate 466, and aspartate 468 together coordinate Mg(2+). Residues cysteine 823, cysteine 897, cysteine 904, and cysteine 907 each coordinate Zn(2+).

The protein belongs to the RNA polymerase beta' chain family. In terms of assembly, the RNAP catalytic core consists of 2 alpha, 1 beta, 1 beta' and 1 omega subunit. When a sigma factor is associated with the core the holoenzyme is formed, which can initiate transcription. Mg(2+) is required as a cofactor. It depends on Zn(2+) as a cofactor.

It carries out the reaction RNA(n) + a ribonucleoside 5'-triphosphate = RNA(n+1) + diphosphate. DNA-dependent RNA polymerase catalyzes the transcription of DNA into RNA using the four ribonucleoside triphosphates as substrates. This Gluconacetobacter diazotrophicus (strain ATCC 49037 / DSM 5601 / CCUG 37298 / CIP 103539 / LMG 7603 / PAl5) protein is DNA-directed RNA polymerase subunit beta'.